The chain runs to 78 residues: D-alanyl carrier protein (78 aa).

The Carrier domain occupies 1-78; the sequence is MEFREQVLDL…KIVEVLEELR (78 aa). Serine 36 carries the post-translational modification O-(pantetheine 4'-phosphoryl)serine.

The protein belongs to the DltC family. 4'-phosphopantetheine is transferred from CoA to a specific serine of apo-DCP.

It is found in the cytoplasm. It participates in cell wall biogenesis; lipoteichoic acid biosynthesis. Carrier protein involved in the D-alanylation of lipoteichoic acid (LTA). The loading of thioester-linked D-alanine onto DltC is catalyzed by D-alanine--D-alanyl carrier protein ligase DltA. The DltC-carried D-alanyl group is further transferred to cell membrane phosphatidylglycerol (PG) by forming an ester bond, probably catalyzed by DltD. D-alanylation of LTA plays an important role in modulating the properties of the cell wall in Gram-positive bacteria, influencing the net charge of the cell wall. This chain is D-alanyl carrier protein, found in Staphylococcus xylosus.